We begin with the raw amino-acid sequence, 99 residues long: RNA-binding protein Hfq (99 aa).

Residues 9-68 enclose the Sm domain; the sequence is DPYLNALRRERIPVSIYLVNGIKLQGQIESFDQFVILLKNTVNQMVYKHAISTVVPARSV. Positions 67–99 are disordered; the sequence is SVSHHNNNAQQQYQQQAAQAASAQSNETSSQAE. A compositionally biased stretch (low complexity) spans 72–99; sequence NNNAQQQYQQQAAQAASAQSNETSSQAE.

Belongs to the Hfq family. As to quaternary structure, homohexamer.

Its function is as follows. RNA chaperone that binds small regulatory RNA (sRNAs) and mRNAs to facilitate mRNA translational regulation in response to envelope stress, environmental stress and changes in metabolite concentrations. Also binds with high specificity to tRNAs. The chain is RNA-binding protein Hfq from Actinobacillus succinogenes (strain ATCC 55618 / DSM 22257 / CCUG 43843 / 130Z).